Consider the following 236-residue polypeptide: UPF0502 protein Bcenmc03_4618 (236 aa).

It belongs to the UPF0502 family.

The chain is UPF0502 protein Bcenmc03_4618 from Burkholderia orbicola (strain MC0-3).